The chain runs to 224 residues: Synaptogyrin-2 (224 aa).

An N-acetylmethionine modification is found at Met-1. Ser-3 carries the phosphoserine modification. In terms of domain architecture, MARVEL spans 20-171 (YVSQPQVVTR…LASLAYQRYK (152 aa)). The next 4 helical transmembrane spans lie at 30 to 50 (LVSMVLALIVFSCIFGEGYIN), 73 to 93 (AIGVLAFLASAFFLVVDAFFS), 105 to 125 (VIGDLLFSALWTFLWFVGFCF), and 147 to 167 (AAITFSFFSIFSWGVLASLAY).

Belongs to the synaptogyrin family. In terms of processing, may be tyrosine phosphorylated by Src. As to expression, ubiquitously expressed with lower expression in brain (at protein level).

It is found in the cytoplasmic vesicle membrane. It localises to the cytoplasmic vesicle. Its subcellular location is the secretory vesicle. The protein resides in the synaptic vesicle membrane. Its function is as follows. May play a role in regulated exocytosis. In neuronal cells, modulates the localization of synaptophysin/SYP into synaptic-like microvesicles and may therefore play a role in the formation and/or the maturation of this vesicles. May also play a role in GLUT4 storage and transport to the plasma membrane. The polypeptide is Synaptogyrin-2 (Rattus norvegicus (Rat)).